The chain runs to 310 residues: Putative integrase/recombinase y4rE (310 aa).

The region spanning 6-83 (RFLGEKVERY…VLRRFYEYLA (78 aa)) is the Core-binding (CB) domain. A Tyr recombinase domain is found at 104-301 (PPPRILSEAE…SVDLLAMAAE (198 aa)). Residues R148, K173, H245, R248, and H279 contribute to the active site. Y288 acts as the O-(3'-phospho-DNA)-tyrosine intermediate in catalysis.

It belongs to the 'phage' integrase family.

In Sinorhizobium fredii (strain NBRC 101917 / NGR234), this protein is Putative integrase/recombinase y4rE.